We begin with the raw amino-acid sequence, 332 residues long: Glycerol-3-phosphate dehydrogenase [NAD(P)+] (332 aa).

NADPH-binding residues include Trp-13, Lys-34, and Lys-108. Sn-glycerol 3-phosphate contacts are provided by Lys-108, Gly-136, and Ser-138. Residue Ala-140 coordinates NADPH. Sn-glycerol 3-phosphate contacts are provided by Lys-191, Asp-244, Ser-254, Arg-255, and Asn-256. Lys-191 acts as the Proton acceptor in catalysis. Arg-255 serves as a coordination point for NADPH. Val-279 and Glu-281 together coordinate NADPH.

The protein belongs to the NAD-dependent glycerol-3-phosphate dehydrogenase family.

The protein localises to the cytoplasm. The enzyme catalyses sn-glycerol 3-phosphate + NAD(+) = dihydroxyacetone phosphate + NADH + H(+). It catalyses the reaction sn-glycerol 3-phosphate + NADP(+) = dihydroxyacetone phosphate + NADPH + H(+). It participates in membrane lipid metabolism; glycerophospholipid metabolism. Its function is as follows. Catalyzes the reduction of the glycolytic intermediate dihydroxyacetone phosphate (DHAP) to sn-glycerol 3-phosphate (G3P), the key precursor for phospholipid synthesis. This Francisella tularensis subsp. novicida (strain U112) protein is Glycerol-3-phosphate dehydrogenase [NAD(P)+].